The following is an 833-amino-acid chain: Leucine--tRNA ligase (833 aa).

The short motif at 41–52 (PYPSGAGLHVGH) is the 'HIGH' region element. The short motif at 610–614 (KMSKS) is the 'KMSKS' region element. Lysine 613 serves as a coordination point for ATP.

The protein belongs to the class-I aminoacyl-tRNA synthetase family.

The protein localises to the cytoplasm. It carries out the reaction tRNA(Leu) + L-leucine + ATP = L-leucyl-tRNA(Leu) + AMP + diphosphate. The sequence is that of Leucine--tRNA ligase from Streptococcus uberis (strain ATCC BAA-854 / 0140J).